The chain runs to 354 residues: Probable serine acetyltransferase 2 (354 aa).

The protein belongs to the transferase hexapeptide repeat family. In terms of assembly, homomultimer.

It carries out the reaction L-serine + acetyl-CoA = O-acetyl-L-serine + CoA. The protein operates within amino-acid biosynthesis; L-cysteine biosynthesis; L-cysteine from L-serine: step 1/2. The protein is Probable serine acetyltransferase 2 (SAT2) of Oryza sativa subsp. japonica (Rice).